We begin with the raw amino-acid sequence, 356 residues long: Glutamine synthetase N-1 (356 aa).

The GS beta-grasp domain occupies 19–99; the sequence is VIAEYIWVGG…VMCDAYTPAG (81 aa). Positions 106 to 356 constitute a GS catalytic domain; it reads KRHNAAKIFS…IAETTLLWKP (251 aa).

It belongs to the glutamine synthetase family. As to quaternary structure, homooctamer. As to expression, this is a nodule isozyme.

Its subcellular location is the cytoplasm. It catalyses the reaction L-glutamate + NH4(+) + ATP = L-glutamine + ADP + phosphate + H(+). The chain is Glutamine synthetase N-1 (Gln-gamma) from Phaseolus vulgaris (Kidney bean).